The following is a 196-amino-acid chain: Nucleotide kinase gp1.7 (196 aa).

The segment at 97–118 (PRKPHLNKPEVTPTDDQPSAET) is disordered.

Dodecamer.

The catalysed reaction is dGMP + ATP = dGDP + ADP. It carries out the reaction dTMP + ATP = dTDP + ADP. Its function is as follows. Nucleotide kinase that catalyzes the phosphorylation of dGMP and dTMP to dGDP and dTDP. A double mutation in this protein and the RecBCD inhibitor gp5.9 protein allow phage to overcome the retron Ec48 bacteriophage defense system. This protein alone when overexpressed in E.coli does not cause growth arrest; Y128C may be a silent mutation. This Escherichia coli (Bacteriophage T7) protein is Nucleotide kinase gp1.7.